Here is a 398-residue protein sequence, read N- to C-terminus: Thyrotropin-releasing hormone receptor (398 aa).

Residues 1-28 (MENETVSELNQTQLQPRAVVALEYQVVT) are Extracellular-facing. N-linked (GlcNAc...) asparagine glycans are attached at residues Asn3 and Asn10. A helical membrane pass occupies residues 29–51 (ILLVLIICGLGIVGNIMVVLVVM). Residues 52–61 (RTKHMRTPTN) lie on the Cytoplasmic side of the membrane. Residues 62-83 (CYLVSLAVADLMVLVAAGLPNI) form a helical membrane-spanning segment. At 84-99 (TDSIYGSWVYGYVGCL) the chain is on the extracellular side. Cys98 and Cys179 are oxidised to a cystine. Residues 100 to 121 (CITYLQYLGINASSCSITAFTI) traverse the membrane as a helical segment. Residues 122–144 (ERYIAICHPIKAQFLCTFSRAKK) lie on the Cytoplasmic side of the membrane. The chain crosses the membrane as a helical span at residues 145 to 168 (IIIFVWAFTSLYCMLWFFLLDLNI). Over 169 to 193 (STYKDAIVISCGYKISRNYYSPIYL) the chain is Extracellular. A helical transmembrane segment spans residues 194–215 (MDFGVFYVVPMILATVLYGFIA). Topologically, residues 216–266 (RILFLNPIPSDPKENSKTWKNDSTHQNTNLNVNTSNRCFNSTVSSRKQVTK) are cytoplasmic. A helical transmembrane segment spans residues 267 to 288 (MLAVVVILFALLWMPYRTLVVV). Residues 289–296 (NSFLSSPF) lie on the Extracellular side of the membrane. A helical transmembrane segment spans residues 297–319 (QENWFLLFCRICIYLNSAINPVI). The Cytoplasmic segment spans residues 320-398 (YNLMSQKFRA…LASEVSFSQS (79 aa)).

Belongs to the G-protein coupled receptor 1 family.

The protein resides in the cell membrane. Its function is as follows. Receptor for thyrotropin-releasing hormone (TRH). Upon ligand binding, this G-protein-coupled receptor triggers activation of the phosphatidylinositol (IP3)-calcium-protein kinase C (PKC) pathway. The polypeptide is Thyrotropin-releasing hormone receptor (TRHR) (Homo sapiens (Human)).